Consider the following 308-residue polypeptide: Zinc finger protein unc-98 (308 aa).

2 C2H2-type zinc fingers span residues 111–133 (YKCR…ERIH) and 139–161 (YVCG…AAQH). The C2H2-type 3; degenerate zinc finger occupies 166-186 (GFKCDCGRTFFSYTEMLYHKH). The C2H2-type 4 zinc finger occupies 244–266 (YICEYCSKSYSDSRGLAYHMYSH).

The protein localises to the nucleus. The protein resides in the cytoplasm. In terms of biological role, probable transcription factor. Required for muscle structure. Its dual subcellular localization suggests that it may function both as a muscle adhesion complex protein and as a transcription factor, or work together with transcription factors, to influence gene expression. Thought to act as a molecular bridge between unc-97 and mhc-a at the M-line of muscles, possibly in a signaling role. This is Zinc finger protein unc-98 from Caenorhabditis briggsae.